Reading from the N-terminus, the 453-residue chain is Serine--tRNA ligase (453 aa).

252–254 (TAE) serves as a coordination point for L-serine. Residues 283 to 285 (RKE) and V299 each bind ATP. E306 lines the L-serine pocket. 370–373 (EMVS) provides a ligand contact to ATP. T405 is a binding site for L-serine.

The protein belongs to the class-II aminoacyl-tRNA synthetase family. Type-1 seryl-tRNA synthetase subfamily. As to quaternary structure, homodimer. The tRNA molecule binds across the dimer.

The protein resides in the cytoplasm. It carries out the reaction tRNA(Ser) + L-serine + ATP = L-seryl-tRNA(Ser) + AMP + diphosphate + H(+). It catalyses the reaction tRNA(Sec) + L-serine + ATP = L-seryl-tRNA(Sec) + AMP + diphosphate + H(+). It functions in the pathway aminoacyl-tRNA biosynthesis; selenocysteinyl-tRNA(Sec) biosynthesis; L-seryl-tRNA(Sec) from L-serine and tRNA(Sec): step 1/1. Its function is as follows. Catalyzes the attachment of serine to tRNA(Ser). Is also able to aminoacylate tRNA(Sec) with serine, to form the misacylated tRNA L-seryl-tRNA(Sec), which will be further converted into selenocysteinyl-tRNA(Sec). This Sulfurisphaera tokodaii (strain DSM 16993 / JCM 10545 / NBRC 100140 / 7) (Sulfolobus tokodaii) protein is Serine--tRNA ligase.